A 131-amino-acid chain; its full sequence is MEPSACEDLKAFERRLTEVVSSYRPSTFRWRKLLAVVLSAMSMCTAISAWYWLRDPRTTVVPLTESLWIHPVFTVATLTLVVLFILGIQKLVIAPQIITSRTRMVLGDFNMSCDDTGKLILKPRQSNNNST.

Transmembrane regions (helical) follow at residues 33–53 and 68–88; these read LLAVVLSAMSMCTAISAWYWL and WIHPVFTVATLTLVVLFILGI.

Belongs to the CNEP1R1 family.

Its subcellular location is the nucleus membrane. It is found in the cytoplasm. May form with the serine/threonine protein phosphatase l(1)G0269 an active complex dephosphorylating and activating lipin-like phosphatases. Lipins are phosphatidate phosphatases that catalyze the conversion of phosphatidic acid to diacylglycerol and control the metabolism of fatty acids at different levels. This is Nuclear envelope phosphatase-regulatory subunit 1 homolog from Drosophila melanogaster (Fruit fly).